Here is a 294-residue protein sequence, read N- to C-terminus: Protein CHLOROPLAST J-LIKE DOMAIN 1, chloroplastic (294 aa).

The N-terminal 58 residues, 1–58 (MAPALSTSCSSVMAFSTSNALRYHHPQISLRNSLRAPKSPSFVRLPLGKVLQSRIVIR), are a transit peptide targeting the chloroplast. Residues 59 to 164 (AASSAAGNPQ…GPRFSRSSKN (106 aa)) lie on the Stromal side of the membrane. The J-like domain stretch occupies residues 74 to 152 (NPYEVLGVNP…IKYADKQPII (79 aa)). Residues 165-182 (DMLINLAISVVFSAWIAI) traverse the membrane as a helical segment. Topologically, residues 183-233 (KRNVEYKPLQFMSFVFVYRIFEKLKSFEAPSSPIYNEEGEESGRGLRMGKR) are chloroplast intermembrane. Residues 234–256 (LLRSLSLVFGSILLASLAYTGFL) form a helical membrane-spanning segment. At 257–275 (NGIEYMGYSIPMVLYNNQE) the chain is on the stromal side. Residues 276–293 (LIVTASSAFMLYVIASFY) traverse the membrane as a helical segment. Residue R294 is a topological domain, chloroplast intermembrane.

Interacts (via J-like domain) with ARC6 (via J domain).

Its subcellular location is the plastid. It is found in the chloroplast inner membrane. Probably involved in the regulation of the fatty acid metabolic process in chloroplasts, especially chloroplastic galactolipids monogalactosyldiacylglycerol (MGDG) and digalactosyldiacylglycerol (DGDG). The sequence is that of Protein CHLOROPLAST J-LIKE DOMAIN 1, chloroplastic from Arabidopsis thaliana (Mouse-ear cress).